The primary structure comprises 443 residues: Putative F-box/FBD/LRR-repeat protein At5g22670 (443 aa).

The F-box domain occupies 10–56; that stretch reads QDSISLLPDDLLCRILSNLPTKVAVRTSVLSKRWKRFSLSVPLLEFN. 5 LRR repeats span residues 139 to 165, 166 to 191, 219 to 243, 275 to 300, and 325 to 353; these read SLRL…HLID, NIYP…NVSR, YGDI…SLRD, NFLL…TMSG, and YAVF…VLEL. In terms of domain architecture, FBD spans 361–412; it reads LLILSSSIPKCLRSSLEHVEIHTPISGAEAEMKLVKYFLENSAVLKKFTLQL.

The protein is Putative F-box/FBD/LRR-repeat protein At5g22670 of Arabidopsis thaliana (Mouse-ear cress).